Consider the following 608-residue polypeptide: Leucine aminopeptidase 2 (608 aa).

Substrate is bound by residues 134–136 (QCQ) and 269–274 (PYGGME). A Zn(2+)-binding site is contributed by histidine 298. The active-site Proton acceptor is the glutamate 299. 2 residues coordinate Zn(2+): histidine 302 and glutamate 321. Residue tyrosine 386 is the Proton donor of the active site.

This sequence belongs to the peptidase M1 family. Zn(2+) is required as a cofactor.

The protein resides in the cytoplasm. Its subcellular location is the nucleus. It carries out the reaction an epoxide + H2O = an ethanediol. Aminopeptidase that preferentially cleaves di- and tripeptides. Also has low epoxide hydrolase activity (in vitro). Can hydrolyze the epoxide leukotriene LTA(4) but it forms preferentially 5,6-dihydroxy-7,9,11,14-eicosatetraenoic acid rather than the cytokine leukotriene B(4) as the product compared to the homologous mammalian enzyme (in vitro). The chain is Leucine aminopeptidase 2 from Sclerotinia sclerotiorum (strain ATCC 18683 / 1980 / Ss-1) (White mold).